Reading from the N-terminus, the 279-residue chain is Acetylglutamate kinase (279 aa).

Substrate is bound by residues 64 to 65, arginine 86, and asparagine 177; that span reads GG.

Belongs to the acetylglutamate kinase family. ArgB subfamily.

The protein resides in the cytoplasm. The enzyme catalyses N-acetyl-L-glutamate + ATP = N-acetyl-L-glutamyl 5-phosphate + ADP. Its pathway is amino-acid biosynthesis; L-arginine biosynthesis; N(2)-acetyl-L-ornithine from L-glutamate: step 2/4. Catalyzes the ATP-dependent phosphorylation of N-acetyl-L-glutamate. This is Acetylglutamate kinase from Campylobacter jejuni subsp. doylei (strain ATCC BAA-1458 / RM4099 / 269.97).